The sequence spans 358 residues: Trace amine-associated receptor 7d (358 aa).

Over 1–47 (MATGDDSFPWDQDSILSRDLFSATSTELCYENLNRSCVRSPYSPGPR) the chain is Extracellular. Asn-34 carries an N-linked (GlcNAc...) asparagine glycan. 2 disulfides stabilise this stretch: Cys-37–Cys-201 and Cys-120–Cys-205. The chain crosses the membrane as a helical span at residues 48–68 (LILYAVFGFGAVLAVCGNLLV). The Cytoplasmic portion of the chain corresponds to 69–83 (MTSILHFRQLHSPAN). Residues 84-104 (FLVASLACADFLVGVMVMPFS) traverse the membrane as a helical segment. Residues 105–121 (MVRSVEGCWYFGESYCK) lie on the Extracellular side of the membrane. The chain crosses the membrane as a helical span at residues 122–143 (FHSCFEGSFCYSSLFHLCFISV). Over 144–166 (DRYIAVSDPLTYPTRFTASVSGK) the chain is Cytoplasmic. The helical transmembrane segment at 167 to 187 (CITFSWLLSIIYSFSLLYTGA) threads the bilayer. Topologically, residues 188-212 (NDAGLEDLVSALTCVGGCQIAVNQT) are extracellular. Asn-210 is a glycosylation site (N-linked (GlcNAc...) asparagine). A helical transmembrane segment spans residues 213–233 (WVFINFLLFLIPTLVMITVYS). Over 234–274 (KIFLIAKQQAQNIEKMSKQTARASESYKDRVTKRERKAAKT) the chain is Cytoplasmic. Residues 275 to 295 (LGIAVAAFLLSWLPYFIDSII) traverse the membrane as a helical segment. The Extracellular segment spans residues 296–309 (DAFLGFITPTYVYE). A helical membrane pass occupies residues 310–333 (ILVWIVYYNSAMNPLIYAFFYSWF). The Cytoplasmic segment spans residues 334–358 (RKAIKLIVSGKILRENSSTTNLFPE).

Belongs to the G-protein coupled receptor 1 family. Specifically expressed in neurons of the olfactory epithelium.

Its subcellular location is the cell membrane. In terms of biological role, olfactory receptor specific for trace amines, such as beta-phenylethylamine (beta-PEA). Trace amine compounds are enriched in animal body fluids and act on trace amine-associated receptors (TAARs) to elicit both intraspecific and interspecific innate behaviors. Ligand-binding causes a conformation change that triggers signaling via G(s)-class of G alpha proteins (GNAL or GNAS). This chain is Trace amine-associated receptor 7d, found in Mus musculus (Mouse).